The following is a 449-amino-acid chain: Exodeoxyribonuclease 7 large subunit (449 aa).

This sequence belongs to the XseA family. In terms of assembly, heterooligomer composed of large and small subunits.

It is found in the cytoplasm. The catalysed reaction is Exonucleolytic cleavage in either 5'- to 3'- or 3'- to 5'-direction to yield nucleoside 5'-phosphates.. In terms of biological role, bidirectionally degrades single-stranded DNA into large acid-insoluble oligonucleotides, which are then degraded further into small acid-soluble oligonucleotides. This is Exodeoxyribonuclease 7 large subunit from Salmonella schwarzengrund (strain CVM19633).